A 384-amino-acid polypeptide reads, in one-letter code: Shufflon-specific DNA recombinase (384 aa).

The region spanning 9-96 (MSLSRALDKY…LLSSLFNIAR (88 aa)) is the Core-binding (CB) domain. The 167-residue stretch at 118–284 (GRDRRLTSSE…RAWQLVSKLD (167 aa)) folds into the Tyr recombinase domain. Residues Arg155, Lys180, His235, Arg238, and His262 contribute to the active site. Residue Tyr271 is the O-(3'-phospho-DNA)-tyrosine intermediate of the active site.

It belongs to the 'phage' integrase family.

Functionally, shufflon-specific DNA recombinase. The protein is Shufflon-specific DNA recombinase (rci) of Escherichia coli.